A 421-amino-acid chain; its full sequence is SIRNPQLYPLKPCKGTASMTLGCLVKDYFPNPVTVTWYSDSLNMSTVNFPALGSELKVTTSQVTSWGKSAKNFTCHVTHPPSFNESRTILVRPVNITEPTLELLHSSCDPNAFHSTIQLYCFIYGHILNDVSVSWLMDDREITDTLAQTVLIKEEGKLASTCSKLNITEQQWMSESTFTCKVTSQGVDYLAHTRRCPDHEPRGVITYLIPPSPLDLYQNGAPKLTCLVVDLESEKNVNVTWNQEKKTSVSASQWYTKHHNNATTSITSILPVVAKDWIEGYGYQCIVDHPDFPKPIVRSITKTPGQRSAPEVYVFPPPEEESEDKRTLTCLIQNFFPEDISVQWLGDGKLISNSQHSTTTPLKSNGSNQGFFIFSRLEVAKTLWTQRKQFTCQVIHEALQKPRKLEKTISTSLGNTSLRPS.

Ig-like domains follow at residues 5 to 97 (PQLY…VNIT), 99 to 184 (PTLE…KVTS), 201 to 301 (PRGV…RSIT), and 310 to 410 (PEVY…KTIS). A disulfide bridge links Cys-23 with Cys-75. Asn-43, Asn-72, Asn-84, Asn-95, Asn-166, Asn-238, Asn-261, Asn-365, and Asn-415 each carry an N-linked (GlcNAc...) asparagine glycan. Intrachain disulfides connect Cys-121/Cys-180, Cys-226/Cys-285, and Cys-330/Cys-392.

As to quaternary structure, the basic structural unit consists of two identical heavy chains and two identical light chains; disulfide-linked. N-terminal variable regions of the heavy and light chains form the antigen binding sites, whereas the C-terminal constant regions of the heavy chains interact with immune receptors to mediate effector functions.

It is found in the secreted. Its subcellular location is the cell membrane. Constant region of immunoglobulin heavy chains. Immunoglobulins, also known as antibodies, are membrane-bound or secreted glycoproteins produced by B lymphocytes. In the recognition phase of humoral immunity, the membrane-bound immunoglobulins serve as receptors which, upon binding of a specific antigen, trigger the clonal expansion and differentiation of B lymphocytes into immunoglobulins-secreting plasma cells. Secreted immunoglobulins mediate the effector phase of humoral immunity, which results in the elimination of bound antigens. The antigen binding site is formed by the variable domain of one heavy chain, together with that of its associated light chain. Thus, each immunoglobulin has two antigen binding sites with remarkable affinity for a particular antigen. The variable domains are assembled by a process called V-(D)-J rearrangement and can then be subjected to somatic hypermutations which, after exposure to antigen and selection, allow affinity maturation for a particular antigen. In Mus musculus (Mouse), this protein is Immunoglobulin heavy constant epsilon.